A 248-amino-acid polypeptide reads, in one-letter code: Isoprenyl transferase (248 aa).

Asp-23 is a catalytic residue. Mg(2+) is bound at residue Asp-23. Residues 24-27, Trp-28, Arg-36, His-40, and 68-70 contribute to the substrate site; these read GNGR and STE. Residue Asn-71 is the Proton acceptor of the active site. Residues Trp-72, Arg-74, Arg-185, and 191 to 193 each bind substrate; that span reads RIS. Mg(2+) is bound at residue Glu-204.

Belongs to the UPP synthase family. Homodimer. Mg(2+) serves as cofactor.

Its function is as follows. Catalyzes the condensation of isopentenyl diphosphate (IPP) with allylic pyrophosphates generating different type of terpenoids. The sequence is that of Isoprenyl transferase from Neisseria gonorrhoeae (strain ATCC 700825 / FA 1090).